Consider the following 576-residue polypeptide: Sulfite reductase [NADPH] hemoprotein beta-component (576 aa).

4 residues coordinate [4Fe-4S] cluster: Cys-439, Cys-445, Cys-485, and Cys-489. Cys-489 provides a ligand contact to siroheme.

The protein belongs to the nitrite and sulfite reductase 4Fe-4S domain family. Alpha(8)-beta(8). The alpha component is a flavoprotein, the beta component is a hemoprotein. The cofactor is siroheme. It depends on [4Fe-4S] cluster as a cofactor.

It catalyses the reaction hydrogen sulfide + 3 NADP(+) + 3 H2O = sulfite + 3 NADPH + 4 H(+). The protein operates within sulfur metabolism; hydrogen sulfide biosynthesis; hydrogen sulfide from sulfite (NADPH route): step 1/1. Its function is as follows. Component of the sulfite reductase complex that catalyzes the 6-electron reduction of sulfite to sulfide. This is one of several activities required for the biosynthesis of L-cysteine from sulfate. The chain is Sulfite reductase [NADPH] hemoprotein beta-component from Aliivibrio salmonicida (strain LFI1238) (Vibrio salmonicida (strain LFI1238)).